The sequence spans 636 residues: MSGETLEFQAEARQLLQLMVHSIYSNKDVFLRELISNASDALDKLRLASMRDKDLDVDTSDLHIAIEVDQDARTLTVRDNGIGMTRDEVVQVIGTIAKSGTAELLRKLRETTDAETSQELIGQFGVGFYAAFMVADRVVLVTRQAGEADGTHWESSGEGTYTIAPATDVPQGTAVTLHLKPVDSEDNLHDYAAEWTIRQIVKRYSDFIAHPIRMAVERPGSDDSEPTTEVQTLNSMKALWARPRDEVEPAEYHEFYKHVSHDWADPLEVVHMRGEGTFEYEALLFLPTHAPLDLFSPQGRRGVQLYVKRVFIMDDCEALMPGYLRFVKGVVDAHDLSLNISRELLQQDRQIQVVRRRLVKKVLATVKDLKANQPEKYRTFWTEFGAVVKEGLIDDTENRDSLLEILSVASTHDPAEPTDLTGYVNRMKDGQSEIYYATGENRTTIENSPHMEAFRAKGFEVLLLTDPVDEVWVERVGEYDGKTLRSVAKGQVDLDTDEERSAAEAERERQRTEYADLLTWLGSALADQVREVRLSARLTTSPACVVGDAHDVTPTLEKMYRAMGHEVPQVKRILELNPTHPLVSGLRKAREQGATEDSLTETAELLYGMALLAEGGELADPSRFTRILAERLARTL.

An a; substrate-binding region spans residues 1 to 342; sequence MSGETLEFQA…AHDLSLNISR (342 aa). A b region spans residues 343–558; that stretch reads ELLQQDRQIQ…AHDVTPTLEK (216 aa). The c stretch occupies residues 559–636; that stretch reads MYRAMGHEVP…ILAERLARTL (78 aa).

Belongs to the heat shock protein 90 family. As to quaternary structure, homodimer.

The protein resides in the cytoplasm. Its function is as follows. Molecular chaperone. Has ATPase activity. This Salinispora arenicola (strain CNS-205) protein is Chaperone protein HtpG.